The chain runs to 433 residues: Glutamate-1-semialdehyde 2,1-aminomutase (433 aa).

At lysine 273 the chain carries N6-(pyridoxal phosphate)lysine.

Belongs to the class-III pyridoxal-phosphate-dependent aminotransferase family. HemL subfamily. Homodimer. Requires pyridoxal 5'-phosphate as cofactor.

The protein localises to the cytoplasm. The enzyme catalyses (S)-4-amino-5-oxopentanoate = 5-aminolevulinate. It participates in porphyrin-containing compound metabolism; protoporphyrin-IX biosynthesis; 5-aminolevulinate from L-glutamyl-tRNA(Glu): step 2/2. It functions in the pathway porphyrin-containing compound metabolism; chlorophyll biosynthesis. In Crocosphaera subtropica (strain ATCC 51142 / BH68) (Cyanothece sp. (strain ATCC 51142)), this protein is Glutamate-1-semialdehyde 2,1-aminomutase.